A 281-amino-acid chain; its full sequence is Protoheme IX farnesyltransferase (281 aa).

Transmembrane regions (helical) follow at residues 13-33 (VIWL…GPLV), 38-58 (LIEL…FNMY), 85-105 (ALTF…LWLG), 107-127 (WVTL…TIML), 132-152 (WLNI…GWIM), 161-181 (ILLS…LAYY), 206-226 (IISI…QLYM), 227-247 (AKLI…IVTI), and 261-281 (MFKA…ISRI).

This sequence belongs to the UbiA prenyltransferase family. Protoheme IX farnesyltransferase subfamily.

It localises to the cell membrane. The catalysed reaction is heme b + (2E,6E)-farnesyl diphosphate + H2O = Fe(II)-heme o + diphosphate. It functions in the pathway porphyrin-containing compound metabolism; heme O biosynthesis; heme O from protoheme: step 1/1. Functionally, converts heme B (protoheme IX) to heme O by substitution of the vinyl group on carbon 2 of heme B porphyrin ring with a hydroxyethyl farnesyl side group. The polypeptide is Protoheme IX farnesyltransferase (Caldivirga maquilingensis (strain ATCC 700844 / DSM 13496 / JCM 10307 / IC-167)).